An 84-amino-acid polypeptide reads, in one-letter code: Putative membrane protein insertion efficiency factor (84 aa).

It belongs to the UPF0161 family.

It localises to the cell inner membrane. Its function is as follows. Could be involved in insertion of integral membrane proteins into the membrane. The polypeptide is Putative membrane protein insertion efficiency factor (Shewanella denitrificans (strain OS217 / ATCC BAA-1090 / DSM 15013)).